A 396-amino-acid polypeptide reads, in one-letter code: Putative T-box protein 39 (396 aa).

The T-box DNA-binding region spans 11–192; the sequence is MAEEDRWKQW…KNSTYGNRLD (182 aa). Residues 185–215 form a disordered region; the sequence is STYGNRLDGGNKRKNTDSSEERTSKRSKNET. Over residues 193–215 the composition is skewed to basic and acidic residues; sequence GGNKRKNTDSSEERTSKRSKNET.

Its subcellular location is the nucleus. The polypeptide is Putative T-box protein 39 (tbx-39) (Caenorhabditis elegans).